A 503-amino-acid polypeptide reads, in one-letter code: Putative FBD-associated F-box protein At5g56410 (503 aa).

Residues Asp-2–Asp-50 enclose the F-box domain. One can recognise an FBD domain in the interval Phe-361–Ile-412.

The sequence is that of Putative FBD-associated F-box protein At5g56410 from Arabidopsis thaliana (Mouse-ear cress).